Consider the following 222-residue polypeptide: Protein ORM1 (222 aa).

Residues 1 to 57 (MTELDYQGTAEAASTSYSRNQTDLKPFPSAGSASSSIKTTEPVKDHRRRRSSSIISH) form a disordered region. Residues 1–85 (MTELDYQGTA…NATWVDQRGA (85 aa)) are Cytoplasmic-facing. Over residues 12–23 (AASTSYSRNQTD) the composition is skewed to polar residues. Ser-29, Ser-32, and Ser-56 each carry phosphoserine. The helical transmembrane segment at 86–106 (WIIHVVIIILLKLFYNLFPGV) threads the bilayer. The Extracellular portion of the chain corresponds to 107 to 109 (TTE). Residues 110-130 (WSWTLTNMTYVIGSYVMFHLI) traverse the membrane as a helical segment. Over 131–162 (KGTPFDFNGGAYDNLTMWEQIDDETLYTPSRK) the chain is Cytoplasmic. Residues 163-183 (FLISVPIALFLVSTHYAHYDL) form a helical membrane-spanning segment. A topological domain (extracellular) is located at residue Lys-184. A helical transmembrane segment spans residues 185 to 205 (LFSWNCFLTTFGAVVPKLPVT). Residues 206-222 (HRLRISIPGITGRAQIS) lie on the Cytoplasmic side of the membrane.

Belongs to the ORM family. Component of the SPOTS complex, at least composed of LCB1/2 (LCB1 and/or LCB2), ORM1/2 (ORM1 and/or ORM2), SAC1 and TSC3. Phosphorylated in case of disruption of sphingolipid synthesis. Phosphorylation regulates inhibitory activity of serine palmitoyltransferases (LCB1 and LCB2).

The protein resides in the endoplasmic reticulum membrane. Functionally, component of the SPOTS complex that acts as a negative regulator of sphingolipid synthesis. Acts by inhibiting serine palmitoyltransferases (LCB1 and LCB2) activity. Along with ORM2, plays a role in the phosphorylation of LAC1 and YPK1, the distribution of actin patches between mother and daughter cells, and in endocytosis. Disruption or inhibition of sphingolipid synthesis leads to the activation and phosphorylation of YPK1 through the TORC2 and PKH1 pathways, which in turn phosphorylates ORM1 and LAG1 to activate sphingolipid synthesis. This Saccharomyces cerevisiae (strain ATCC 204508 / S288c) (Baker's yeast) protein is Protein ORM1 (ORM1).